The following is a 271-amino-acid chain: MATH domain and coiled-coil domain-containing protein At3g27040 (271 aa).

The 127-residue stretch at 7 to 133 (DKKFTWVIKN…NGEVKIVAEV (127 aa)) folds into the MATH domain. A coiled-coil region spans residues 230 to 271 (KLDWLEKKLKETGKSRLQEIEEDLKDLKVKCADMDALLDFLR).

The protein is MATH domain and coiled-coil domain-containing protein At3g27040 of Arabidopsis thaliana (Mouse-ear cress).